A 226-amino-acid chain; its full sequence is Large ribosomal subunit protein uL3 (226 aa).

Residue Gln160 is modified to N5-methylglutamine.

This sequence belongs to the universal ribosomal protein uL3 family. Part of the 50S ribosomal subunit. Forms a cluster with proteins L14 and L19. In terms of processing, methylated by PrmB.

Its function is as follows. One of the primary rRNA binding proteins, it binds directly near the 3'-end of the 23S rRNA, where it nucleates assembly of the 50S subunit. The protein is Large ribosomal subunit protein uL3 of Leptothrix cholodnii (strain ATCC 51168 / LMG 8142 / SP-6) (Leptothrix discophora (strain SP-6)).